The primary structure comprises 129 residues: Iron-sulfur cluster assembly 1 homolog, mitochondrial (129 aa).

Residues 1 to 12 constitute a mitochondrion transit peptide; it reads MSASIARATVRA. Fe cation contacts are provided by Cys57, Cys121, and Cys123.

It belongs to the HesB/IscA family.

Its subcellular location is the mitochondrion. Involved in the maturation of mitochondrial 4Fe-4S proteins functioning late in the iron-sulfur cluster assembly pathway. Probably involved in the binding of an intermediate of Fe/S cluster assembly. This Danio rerio (Zebrafish) protein is Iron-sulfur cluster assembly 1 homolog, mitochondrial (isca1).